The following is a 450-amino-acid chain: Signal recognition particle 54 kDa protein (450 aa).

GTP contacts are provided by residues 107–114 (GIQGSGKT), 188–192 (DTAGR), and 247–250 (TKLD).

The protein belongs to the GTP-binding SRP family. SRP54 subfamily. Part of the signal recognition particle protein translocation system, which is composed of SRP and FtsY. Archaeal SRP consists of a 7S RNA molecule of 300 nucleotides and two protein subunits: SRP54 and SRP19.

The protein localises to the cytoplasm. The catalysed reaction is GTP + H2O = GDP + phosphate + H(+). Involved in targeting and insertion of nascent membrane proteins into the cytoplasmic membrane. Binds to the hydrophobic signal sequence of the ribosome-nascent chain (RNC) as it emerges from the ribosomes. The SRP-RNC complex is then targeted to the cytoplasmic membrane where it interacts with the SRP receptor FtsY. This is Signal recognition particle 54 kDa protein from Methanococcus maripaludis (strain C5 / ATCC BAA-1333).